The following is an 85-amino-acid chain: Large ribosomal subunit protein bL31B (85 aa).

Belongs to the bacterial ribosomal protein bL31 family. Type B subfamily. In terms of assembly, part of the 50S ribosomal subunit.

The chain is Large ribosomal subunit protein bL31B from Staphylococcus haemolyticus (strain JCSC1435).